The primary structure comprises 384 residues: Dual-specificity RNA methyltransferase RlmN (384 aa).

The active-site Proton acceptor is glutamate 105. Positions 111-350 constitute a Radical SAM core domain; the sequence is EDDRATLCVS…TIVRKTRGDD (240 aa). The cysteines at positions 118 and 355 are disulfide-linked. Residues cysteine 125, cysteine 129, and cysteine 132 each contribute to the [4Fe-4S] cluster site. Residues 179 to 180, serine 211, 233 to 235, and asparagine 312 each bind S-adenosyl-L-methionine; these read GE and SLH. Cysteine 355 serves as the catalytic S-methylcysteine intermediate.

It belongs to the radical SAM superfamily. RlmN family. [4Fe-4S] cluster serves as cofactor.

The protein resides in the cytoplasm. It carries out the reaction adenosine(2503) in 23S rRNA + 2 reduced [2Fe-2S]-[ferredoxin] + 2 S-adenosyl-L-methionine = 2-methyladenosine(2503) in 23S rRNA + 5'-deoxyadenosine + L-methionine + 2 oxidized [2Fe-2S]-[ferredoxin] + S-adenosyl-L-homocysteine. The enzyme catalyses adenosine(37) in tRNA + 2 reduced [2Fe-2S]-[ferredoxin] + 2 S-adenosyl-L-methionine = 2-methyladenosine(37) in tRNA + 5'-deoxyadenosine + L-methionine + 2 oxidized [2Fe-2S]-[ferredoxin] + S-adenosyl-L-homocysteine. Functionally, specifically methylates position 2 of adenine 2503 in 23S rRNA and position 2 of adenine 37 in tRNAs. m2A2503 modification seems to play a crucial role in the proofreading step occurring at the peptidyl transferase center and thus would serve to optimize ribosomal fidelity. The protein is Dual-specificity RNA methyltransferase RlmN of Shigella boydii serotype 18 (strain CDC 3083-94 / BS512).